The sequence spans 635 residues: Threonine--tRNA ligase (635 aa).

Residues 1 to 61 (MVSIRLPDGS…DRDAALAIIT (61 aa)) enclose the TGS domain. Positions 242–533 (DHRKLGKQLD…LIEHHAGAMP (292 aa)) are catalytic. Residues cysteine 333, histidine 384, and histidine 510 each contribute to the Zn(2+) site.

The protein belongs to the class-II aminoacyl-tRNA synthetase family. As to quaternary structure, homodimer. Requires Zn(2+) as cofactor.

The protein localises to the cytoplasm. It carries out the reaction tRNA(Thr) + L-threonine + ATP = L-threonyl-tRNA(Thr) + AMP + diphosphate + H(+). Its function is as follows. Catalyzes the attachment of threonine to tRNA(Thr) in a two-step reaction: L-threonine is first activated by ATP to form Thr-AMP and then transferred to the acceptor end of tRNA(Thr). Also edits incorrectly charged L-seryl-tRNA(Thr). The protein is Threonine--tRNA ligase of Burkholderia ambifaria (strain ATCC BAA-244 / DSM 16087 / CCUG 44356 / LMG 19182 / AMMD) (Burkholderia cepacia (strain AMMD)).